The chain runs to 334 residues: Sterol 4-C-methyltransferase strm-1 (334 aa).

Belongs to the class I-like SAM-binding methyltransferase superfamily. Erg6/SMT family. As to expression, expressed in the pharynx and hypodermal syncytium.

The enzyme catalyses 5alpha-cholest-7-en-3-one + S-adenosyl-L-methionine = 4alpha-methyl-5alpha-cholest-7-en-3-one + S-adenosyl-L-homocysteine + H(+). Its pathway is steroid hormone biosynthesis; dafachronic acid biosynthesis. Catalyzes the methyl transfer from S-adenosyl-methionine to the C-4 of the A-ring sterols such as lathosterone (5alpha-cholest-7-en-3-one) thereby rendering them unsuitable as ligand precursors. May irreversibly shunt sterols away from hormone dafachronic acid production. Dafachronic acids act as ligands and bind directly to the nuclear hormone receptor (NHR) daf-12 suppressing dauer formation and inducing reproductive growth. By reducing the biosynthesis of dafachronic acids, this methyltransferase can regulate dauer larva formation. The chain is Sterol 4-C-methyltransferase strm-1 (strm-1) from Caenorhabditis elegans.